The primary structure comprises 341 residues: tRNA N6-adenosine threonylcarbamoyltransferase (341 aa).

Positions 115 and 119 each coordinate Fe cation. Residues 138–142 (VVSGG), Asp171, Gly184, Asp188, and Asn279 each bind substrate. Asp307 lines the Fe cation pocket.

This sequence belongs to the KAE1 / TsaD family. Requires Fe(2+) as cofactor.

Its subcellular location is the cytoplasm. The catalysed reaction is L-threonylcarbamoyladenylate + adenosine(37) in tRNA = N(6)-L-threonylcarbamoyladenosine(37) in tRNA + AMP + H(+). Its function is as follows. Required for the formation of a threonylcarbamoyl group on adenosine at position 37 (t(6)A37) in tRNAs that read codons beginning with adenine. Is involved in the transfer of the threonylcarbamoyl moiety of threonylcarbamoyl-AMP (TC-AMP) to the N6 group of A37, together with TsaE and TsaB. TsaD likely plays a direct catalytic role in this reaction. The chain is tRNA N6-adenosine threonylcarbamoyltransferase from Clostridium novyi (strain NT).